Reading from the N-terminus, the 210-residue chain is Pre-mRNA-splicing factor 38 (210 aa).

The disordered stretch occupies residues 181–210; the sequence is PLSSSSDEEDDDEEQISKLESNEGAVDRNI. Residues 195-210 show a composition bias toward basic and acidic residues; that stretch reads QISKLESNEGAVDRNI.

This sequence belongs to the PRP38 family. In terms of assembly, component of the 25S U4/U6.U5 tri-snRNP particle, a subcomplex of the spliceosome.

The protein resides in the nucleus. In terms of biological role, required for pre-mRNA splicing and maintenance of stable U6 small nuclear RNA levels. Implicated in the formation of stable and biologically active snRNP structures. As part of the U4/U6.U5 tri-snRNP particle, dispensible for spliceosome assembly, but required for conformational changes, which result in U4 snRNA release and the subsequent catalytic activation of the spliceosome. The chain is Pre-mRNA-splicing factor 38 from Schizosaccharomyces pombe (strain 972 / ATCC 24843) (Fission yeast).